A 324-amino-acid chain; its full sequence is Beta-ketoacyl-[acyl-carrier-protein] synthase III (324 aa).

Active-site residues include Cys-112 and His-251. The segment at 252-256 is ACP-binding; that stretch reads QANIR. Asn-281 is an active-site residue.

Belongs to the thiolase-like superfamily. FabH family. As to quaternary structure, homodimer.

It is found in the cytoplasm. The enzyme catalyses malonyl-[ACP] + acetyl-CoA + H(+) = 3-oxobutanoyl-[ACP] + CO2 + CoA. It functions in the pathway lipid metabolism; fatty acid biosynthesis. Catalyzes the condensation reaction of fatty acid synthesis by the addition to an acyl acceptor of two carbons from malonyl-ACP. Catalyzes the first condensation reaction which initiates fatty acid synthesis and may therefore play a role in governing the total rate of fatty acid production. Possesses both acetoacetyl-ACP synthase and acetyl transacylase activities. Its substrate specificity determines the biosynthesis of branched-chain and/or straight-chain of fatty acids. This chain is Beta-ketoacyl-[acyl-carrier-protein] synthase III, found in Desulfotalea psychrophila (strain LSv54 / DSM 12343).